We begin with the raw amino-acid sequence, 179 residues long: Large ribosomal subunit protein uL5 (179 aa).

This sequence belongs to the universal ribosomal protein uL5 family. Part of the 50S ribosomal subunit; part of the 5S rRNA/L5/L18/L25 subcomplex. Contacts the 5S rRNA and the P site tRNA. Forms a bridge to the 30S subunit in the 70S ribosome.

This is one of the proteins that bind and probably mediate the attachment of the 5S RNA into the large ribosomal subunit, where it forms part of the central protuberance. In the 70S ribosome it contacts protein S13 of the 30S subunit (bridge B1b), connecting the 2 subunits; this bridge is implicated in subunit movement. Contacts the P site tRNA; the 5S rRNA and some of its associated proteins might help stabilize positioning of ribosome-bound tRNAs. This chain is Large ribosomal subunit protein uL5, found in Dehalococcoides mccartyi (strain ATCC BAA-2266 / KCTC 15142 / 195) (Dehalococcoides ethenogenes (strain 195)).